The primary structure comprises 135 residues: Small ribosomal subunit protein uS9 (135 aa).

The segment covering 102-115 has biased composition (basic and acidic residues); that stretch reads PLKTEGHLSRDPRA. Positions 102 to 135 are disordered; the sequence is PLKTEGHLSRDPRAKERRKYGLKKARKAPQFSKR. Positions 116 to 135 are enriched in basic residues; that stretch reads KERRKYGLKKARKAPQFSKR.

The protein belongs to the universal ribosomal protein uS9 family.

The polypeptide is Small ribosomal subunit protein uS9 (Synechococcus sp. (strain CC9311)).